Reading from the N-terminus, the 511-residue chain is MNAQAILVLDFGSQYSQLIARRIREIGVYTKVIPYYTPLKEIKNMNISGIILSGSPASVYSKEAPTLDMEIFNLKIPVLGICYGMQIIVKLFGGLVSKDSKQEYGRSEIFLKDEKSLLFSELPNKFQIIMSHGDSIEKIPDNFKQLAFTKNCIASISNETQKIYGLQFHPEVTHSEFGDQILKNFVFKICQAQINWSLEGNLETIVKKIKLKVGSKKVILGLSGGTDSLVCALLIKKAINENLICVFVNTGLLRKNENKKILELKHQYDLNIKYIDASTKFLNRLKNISDPEEKRKIIGKEFVDVFEKITLEDQNIEYLAQGTIYSDVIESKSKDSSSSKIKSHHNVGGLPDKMSLKLLEPLNEFFKDEIIQIGINLGIKKESLYRHPFPGPGLAIRIIGEVTQEKINILQEADNILTEELFINDLYYQIRQAFVVLLPVKSVGVMGDQRTYEYTAVIRCVNTQDFMTAEWTELPYSFLKKVSSRIINEVRGINRVCYDISSKPPSTIEWE.

The Glutamine amidotransferase type-1 domain occupies 5-195; the sequence is AILVLDFGSQ…VFKICQAQIN (191 aa). Cysteine 82 acts as the Nucleophile in catalysis. Catalysis depends on residues histidine 169 and glutamate 171. Residues 196 to 386 form the GMPS ATP-PPase domain; it reads WSLEGNLETI…LGIKKESLYR (191 aa). 223–229 serves as a coordination point for ATP; that stretch reads SGGTDSL.

As to quaternary structure, homodimer.

The enzyme catalyses XMP + L-glutamine + ATP + H2O = GMP + L-glutamate + AMP + diphosphate + 2 H(+). It participates in purine metabolism; GMP biosynthesis; GMP from XMP (L-Gln route): step 1/1. In terms of biological role, catalyzes the synthesis of GMP from XMP. This chain is GMP synthase [glutamine-hydrolyzing] (guaA), found in Borreliella burgdorferi (strain N40) (Borrelia burgdorferi).